Here is a 648-residue protein sequence, read N- to C-terminus: Threonine--tRNA ligase (648 aa).

The 63-residue stretch at 1-63 folds into the TGS domain; the sequence is MTEINIEFPD…NENVKIEIVT (63 aa). The segment at 243–541 is catalytic; it reads DHRVIGNNLD…LIEMYKGAFP (299 aa). 3 residues coordinate Zn(2+): cysteine 337, histidine 388, and histidine 518.

It belongs to the class-II aminoacyl-tRNA synthetase family. In terms of assembly, homodimer. Zn(2+) serves as cofactor.

The protein localises to the cytoplasm. The enzyme catalyses tRNA(Thr) + L-threonine + ATP = L-threonyl-tRNA(Thr) + AMP + diphosphate + H(+). Its function is as follows. Catalyzes the attachment of threonine to tRNA(Thr) in a two-step reaction: L-threonine is first activated by ATP to form Thr-AMP and then transferred to the acceptor end of tRNA(Thr). Also edits incorrectly charged L-seryl-tRNA(Thr). The polypeptide is Threonine--tRNA ligase (Pediococcus pentosaceus (strain ATCC 25745 / CCUG 21536 / LMG 10740 / 183-1w)).